The sequence spans 289 residues: MELLCHEVDPVRRAVRDRNLLRDDRVLQNLLTIEERYLPQCSYFKCVQKDIQPYMRRMVATWMLEVCEEQKCEEEVFPLAMNYLDRFLAGVPTPKSHLQLLGAVCMFLASKLKETSPLTAEKLCIYTDNSIKPQELLEWELVVLGKLKWNLAAVTPHDFIEHILRKLPQQREKLSLIRKHAQTFIALCATDFKFAMYPPSMIATGSVGAAICGLQQDEEVSSLTCDALTELLAKITNTDVDCLKACQEQIEAVLLNSLQQYRQDQRDGSKSEDELDQASTPTDVRDIDL.

The Cyclin N-terminal domain maps to Val-26–Leu-151. The tract at residues Asp-264–Leu-289 is disordered. Position 271 is a phosphoserine (Ser-271). Thr-280 bears the Phosphothreonine mark.

This sequence belongs to the cyclin family. Cyclin D subfamily. In terms of assembly, interacts with either CDK4 or CDK6 protein kinase to form a serine/threonine kinase holoenzyme complex. The cyclin subunit imparts substrate specificity to the complex. Post-translationally, phosphorylation at Thr-280 by MAP kinases is required for ubiquitination and degradation by the DCX(AMBRA1) complex. In terms of processing, ubiquitinated by the DCX(AMBRA1) complex during the transition from G1 to S cell phase, leading to its degradation: ubiquitination is dependent on Thr-280 phosphorylation. The DCX(AMBRA1) complex represents the major regulator of CCND2 stability during the G1/S transition. Polyubiquitinated by the SCF(FBXL2) complex, leading to proteasomal degradation.

Its subcellular location is the nucleus. The protein resides in the cytoplasm. The protein localises to the nucleus membrane. Regulatory component of the cyclin D2-CDK4 (DC) complex that phosphorylates and inhibits members of the retinoblastoma (RB) protein family including RB1 and regulates the cell-cycle during G(1)/S transition. Phosphorylation of RB1 allows dissociation of the transcription factor E2F from the RB/E2F complex and the subsequent transcription of E2F target genes which are responsible for the progression through the G(1) phase. Hypophosphorylates RB1 in early G(1) phase. Cyclin D-CDK4 complexes are major integrators of various mitogenenic and antimitogenic signals. This chain is G1/S-specific cyclin-D2, found in Homo sapiens (Human).